The primary structure comprises 340 residues: Solute carrier family 35 member G3 (340 aa).

Residues 11–31 are disordered; sequence PDFTQPSPPSTPSSLTSNHHN. 9 helical membrane-spanning segments follow: residues 39-59, 69-89, 107-127, 160-180, 189-209, 223-243, 257-277, 283-303, and 307-327; these read TKGL…VGPF, LPSL…ALIL, FLHA…VQVV, AWCG…PGLG, LYTA…SLGL, TVAF…LFVL, CMVA…YAVT, LVCA…YYVL, and VAPS…IITA. The region spanning 51-176 is the EamA 1 domain; sequence LSAGFVGPFS…STLGLIIIVG (126 aa). An EamA 2 domain is found at 223–327; it reads TVAFLFGLVG…VLGSIAIITA (105 aa).

This sequence belongs to the SLC35G solute transporter family.

Its subcellular location is the membrane. This Rattus norvegicus (Rat) protein is Solute carrier family 35 member G3 (Slc35g3).